The following is a 316-amino-acid chain: 2,3-dihydroxyphenylpropionate/2,3-dihydroxicinnamic acid 1,2-dioxygenase (316 aa).

Residue histidine 118 is the Proton donor of the active site. The Proton acceptor role is filled by histidine 182.

The protein belongs to the LigB/MhpB extradiol dioxygenase family. Homotetramer. The cofactor is Fe(2+).

It carries out the reaction 3-(2,3-dihydroxyphenyl)propanoate + O2 = (2Z,4E)-2-hydroxy-6-oxonona-2,4-dienedioate + H(+). The catalysed reaction is (2E)-3-(2,3-dihydroxyphenyl)prop-2-enoate + O2 = (2Z,4E,7E)-2-hydroxy-6-oxonona-2,4,7-trienedioate + H(+). Its pathway is aromatic compound metabolism; 3-phenylpropanoate degradation. Catalyzes the non-heme iron(II)-dependent oxidative cleavage of 2,3-dihydroxyphenylpropionic acid and 2,3-dihydroxicinnamic acid into 2-hydroxy-6-ketononadienedioate and 2-hydroxy-6-ketononatrienedioate, respectively. The protein is 2,3-dihydroxyphenylpropionate/2,3-dihydroxicinnamic acid 1,2-dioxygenase of Mycolicibacterium vanbaalenii (strain DSM 7251 / JCM 13017 / BCRC 16820 / KCTC 9966 / NRRL B-24157 / PYR-1) (Mycobacterium vanbaalenii).